A 790-amino-acid polypeptide reads, in one-letter code: Cadherin-6 (790 aa).

An N-terminal signal peptide occupies residues 1 to 18 (MRTYRYFLLLFWVGQPYP). A propeptide spanning residues 19-53 (TFSTPLSKRTSGFPAKKRTLELSGNSKNELSRSKR) is cleaved from the precursor. Cadherin domains follow at residues 54–159 (SWMW…EPIF), 160–268 (TKEV…PPRF), 269–383 (PQST…PPVF), 384–486 (SKLA…DNPP), and 487–608 (EFAE…LVHP). The Extracellular segment spans residues 54-615 (SWMWNQFFLL…VHPTGLSTGA (562 aa)). N255 carries an N-linked (GlcNAc...) asparagine glycan. A disordered region spans residues 261-291 (VNDNPPRFPQSTYQFKTPESSPPGTPIGRIK). Over residues 269 to 279 (PQSTYQFKTPE) the composition is skewed to polar residues. N-linked (GlcNAc...) asparagine glycosylation is found at N399, N437, N455, and N536. The helical transmembrane segment at 616–636 (LIAILLCIVTLLVTVVLFAAL) threads the bilayer. At 637–790 (RRQRKKEPLI…YGGVDSDKDS (154 aa)) the chain is on the cytoplasmic side. Phosphoserine occurs at positions 786 and 790.

The protein resides in the cell membrane. Functionally, cadherins are calcium-dependent cell adhesion proteins. They preferentially interact with themselves in a homophilic manner in connecting cells; cadherins may thus contribute to the sorting of heterogeneous cell types. The polypeptide is Cadherin-6 (CDH6) (Bos taurus (Bovine)).